Consider the following 413-residue polypeptide: Multifunctional CCA protein (413 aa).

Residues G8 and R11 each contribute to the ATP site. Residues G8 and R11 each contribute to the CTP site. Mg(2+) contacts are provided by D21 and D23. The ATP site is built by R91, R137, and R140. CTP contacts are provided by R91, R137, and R140. Residues 228–329 (TGLHTLMTVT…VKLFDSIDAW (102 aa)) enclose the HD domain.

This sequence belongs to the tRNA nucleotidyltransferase/poly(A) polymerase family. Bacterial CCA-adding enzyme type 1 subfamily. In terms of assembly, monomer. Can also form homodimers and oligomers. The cofactor is Mg(2+). Ni(2+) serves as cofactor.

The enzyme catalyses a tRNA precursor + 2 CTP + ATP = a tRNA with a 3' CCA end + 3 diphosphate. The catalysed reaction is a tRNA with a 3' CCA end + 2 CTP + ATP = a tRNA with a 3' CCACCA end + 3 diphosphate. Functionally, catalyzes the addition and repair of the essential 3'-terminal CCA sequence in tRNAs without using a nucleic acid template. Adds these three nucleotides in the order of C, C, and A to the tRNA nucleotide-73, using CTP and ATP as substrates and producing inorganic pyrophosphate. tRNA 3'-terminal CCA addition is required both for tRNA processing and repair. Also involved in tRNA surveillance by mediating tandem CCA addition to generate a CCACCA at the 3' terminus of unstable tRNAs. While stable tRNAs receive only 3'-terminal CCA, unstable tRNAs are marked with CCACCA and rapidly degraded. The sequence is that of Multifunctional CCA protein from Klebsiella pneumoniae subsp. pneumoniae (strain ATCC 700721 / MGH 78578).